A 521-amino-acid polypeptide reads, in one-letter code: Probable tRNA (uracil-O(2)-)-methyltransferase (521 aa).

This sequence belongs to the TRM44 family.

It localises to the cytoplasm. It catalyses the reaction uridine(44) in tRNA(Ser) + S-adenosyl-L-methionine = 2'-O-methyluridine(44) in tRNA(Ser) + S-adenosyl-L-homocysteine + H(+). Functionally, probable adenosyl-L-methionine (AdoMet)-dependent tRNA (uracil-O(2)-)-methyltransferase. This is Probable tRNA (uracil-O(2)-)-methyltransferase (trmt44) from Drosophila melanogaster (Fruit fly).